We begin with the raw amino-acid sequence, 292 residues long: Transmembrane and ubiquitin-like domain-containing protein 1 (292 aa).

Residues 11 to 31 (VTLLFGVVFLVLVLVLAWAST) traverse the membrane as a helical segment. Residues 34–143 (VEPPEHLLSP…TQPSAEDAAS (110 aa)) form a disordered region. Positions 71-80 (VRDEDDKSEP) are enriched in basic and acidic residues. The segment covering 84 to 94 (AGAAGQSADGS) has biased composition (low complexity). Residues 149-222 (MVLRLKFLND…LHCHISQHAT (74 aa)) form the Ubiquitin-like domain. The next 2 helical transmembrane spans lie at 237–257 (VALN…SVLW) and 269–289 (APAT…AFGV).

It is found in the membrane. It localises to the cytoplasm. Its subcellular location is the nucleus. Its function is as follows. May contribute to the regulation of translation during cell-cycle progression. May contribute to the regulation of cell proliferation. The membrane form is involved in sterol-regulated ubiquitination and degradation of HMG-CoA reductase HMGCR. May be involved in centrosome assembly. In Danio rerio (Zebrafish), this protein is Transmembrane and ubiquitin-like domain-containing protein 1 (tmub1).